A 162-amino-acid polypeptide reads, in one-letter code: SsrA-binding protein (162 aa).

The segment at 140–162 (DKRETAAKRDWSRQKSRLMKDHG) is disordered.

Belongs to the SmpB family.

Its subcellular location is the cytoplasm. Its function is as follows. Required for rescue of stalled ribosomes mediated by trans-translation. Binds to transfer-messenger RNA (tmRNA), required for stable association of tmRNA with ribosomes. tmRNA and SmpB together mimic tRNA shape, replacing the anticodon stem-loop with SmpB. tmRNA is encoded by the ssrA gene; the 2 termini fold to resemble tRNA(Ala) and it encodes a 'tag peptide', a short internal open reading frame. During trans-translation Ala-aminoacylated tmRNA acts like a tRNA, entering the A-site of stalled ribosomes, displacing the stalled mRNA. The ribosome then switches to translate the ORF on the tmRNA; the nascent peptide is terminated with the 'tag peptide' encoded by the tmRNA and targeted for degradation. The ribosome is freed to recommence translation, which seems to be the essential function of trans-translation. In Roseobacter denitrificans (strain ATCC 33942 / OCh 114) (Erythrobacter sp. (strain OCh 114)), this protein is SsrA-binding protein.